The primary structure comprises 289 residues: 33 kDa chaperonin (289 aa).

2 disulfides stabilise this stretch: Cys230-Cys232 and Cys263-Cys266.

It belongs to the HSP33 family. Under oxidizing conditions two disulfide bonds are formed involving the reactive cysteines. Under reducing conditions zinc is bound to the reactive cysteines and the protein is inactive.

Its subcellular location is the cytoplasm. Redox regulated molecular chaperone. Protects both thermally unfolding and oxidatively damaged proteins from irreversible aggregation. Plays an important role in the bacterial defense system toward oxidative stress. In Shigella flexneri serotype 5b (strain 8401), this protein is 33 kDa chaperonin.